The sequence spans 283 residues: Phosphate import ATP-binding protein PstB (283 aa).

Residues 1-20 show a composition bias toward polar residues; sequence MAQTLAQTKQISQSHTFDVS. A disordered region spans residues 1 to 32; that stretch reads MAQTLAQTKQISQSHTFDVSQSHHKTPDDTNS. One can recognise an ABC transporter domain in the interval 37-278; that stretch reads YSTQNLDLWY…PSNKKTEDYI (242 aa). 69–76 is a binding site for ATP; that stretch reads GPSGCGKS.

The protein belongs to the ABC transporter superfamily. Phosphate importer (TC 3.A.1.7) family. As to quaternary structure, the complex is composed of two ATP-binding proteins (PstB), two transmembrane proteins (PstC and PstA) and a solute-binding protein (PstS).

The protein localises to the cell membrane. It catalyses the reaction phosphate(out) + ATP + H2O = ADP + 2 phosphate(in) + H(+). In terms of biological role, part of the ABC transporter complex PstSACB involved in phosphate import. Responsible for energy coupling to the transport system. This Staphylococcus aureus (strain USA300) protein is Phosphate import ATP-binding protein PstB.